The following is a 296-amino-acid chain: NAD kinase (296 aa).

The active-site Proton acceptor is D72. Residues 72 to 73 (DG), 146 to 147 (ND), R157, K174, D176, 187 to 192 (TAYALS), and Q247 contribute to the NAD(+) site.

The protein belongs to the NAD kinase family. It depends on a divalent metal cation as a cofactor.

Its subcellular location is the cytoplasm. The enzyme catalyses NAD(+) + ATP = ADP + NADP(+) + H(+). Involved in the regulation of the intracellular balance of NAD and NADP, and is a key enzyme in the biosynthesis of NADP. Catalyzes specifically the phosphorylation on 2'-hydroxyl of the adenosine moiety of NAD to yield NADP. The chain is NAD kinase from Pseudomonas syringae pv. tomato (strain ATCC BAA-871 / DC3000).